The primary structure comprises 424 residues: Proline--tRNA ligase (424 aa).

This sequence belongs to the class-II aminoacyl-tRNA synthetase family. ProS type 2 subfamily. As to quaternary structure, homodimer.

It localises to the cytoplasm. It catalyses the reaction tRNA(Pro) + L-proline + ATP = L-prolyl-tRNA(Pro) + AMP + diphosphate. In terms of biological role, catalyzes the attachment of proline to tRNA(Pro) in a two-step reaction: proline is first activated by ATP to form Pro-AMP and then transferred to the acceptor end of tRNA(Pro). The sequence is that of Proline--tRNA ligase from Ehrlichia canis (strain Jake).